We begin with the raw amino-acid sequence, 423 residues long: MSLSLPPALSELARALPYSRTQWLPILVGFLIGYPLLIKALRYKRLGEMKKKFYFPTRESMAEMTDEEAFLIQKEMAQLEFPFMFLTSGQFALFRTYGIPTISHLLTKTGQFSKPETSFKRYTDTAALIGEMVENSPTSQRAFISVARTRFLHSGYQASGKILDADLLYTLALFAVQPVRFIENFEWRTLSDLELCAIGTFWKSLGDALGISSEILPSGKTGFKDGIQWLEEVDVWSQDYEAKYMVPDPKNRESADQATAVLLYNLPKILHPIGLQFTSYMMDDRLRKAMLYEAPSPGWSAVFSSLLATRKFVLRYLSPPRPAALAVSNIAQKPDKDDRYHRMSWDALPFYIRPTFWNRWGPMAWISWLMAHPVPGDHGQKYYPQGYHIQDIGPKYFEGKGHKEIQEMMKELKISRTGKCPFH.

Topologically, residues 1–22 (MSLSLPPALSELARALPYSRTQ) are lumenal. The helical transmembrane segment at 23–41 (WLPILVGFLIGYPLLIKAL) threads the bilayer. Residues 42 to 423 (RYKRLGEMKK…ISRTGKCPFH (382 aa)) are Cytoplasmic-facing.

The protein belongs to the mpaB oxygenase family.

Its subcellular location is the endoplasmic reticulum membrane. It carries out the reaction 4-farnesyl-3,5-dihydroxy-6-methylphthalide + AH2 + 2 O2 = (4E,8E)-10-(4,6-dihydroxy-7-methyl-3-oxo-1,3-dihydro-2-benzofuran-5-yl)-4,8-dimethyldeca-4,8-dienoate + acetone + A + H2O + H(+). It participates in secondary metabolite biosynthesis; terpenoid biosynthesis. ER-bound oxygenase; part of the gene cluster that mediates the biosynthesis of mycophenolic acid (MPA), the first isolated antibiotic natural product in the world obtained from a culture of Penicillium brevicompactum in 1893. MpaB' catalyzes the oxidative cleavage the C19-C20 double bond in farnesyl-DHMP (FDHMP) to yield FDHMP-3C via a mycophenolic aldehyde intermediate. The first step of the pathway is the synthesis of 5-methylorsellinic acid (5MOA) by the cytosolic polyketide synthase mpaC. 5MOA is then converted to the phthalide compound 5,7-dihydroxy-4,6-dimethylphthalide (DHMP) by the endoplasmic reticulum-bound cytochrome P450 monooxygenase mpaDE. MpaDE first catalyzes hydroxylation of 5-MOA to 4,6-dihydroxy-2-(hydroxymethyl)-3-methylbenzoic acid (DHMB). MpaDE then acts as a lactone synthase that catalyzes the ring closure to convert DHMB into DHMP. The next step is the prenylation of DHMP by the Golgi apparatus-associated prenyltransferase mpaA to yield farnesyl-DHMP (FDHMP). The ER-bound oxygenase mpaB then mediates the oxidative cleavage the C19-C20 double bond in FDHMP to yield FDHMP-3C via a mycophenolic aldehyde intermediate. The O-methyltransferase mpaG catalyzes the methylation of FDHMP-3C to yield MFDHMP-3C. After the cytosolic methylation of FDHMP-3C, MFDHMP-3C enters into peroxisomes probably via free diffusion due to its low molecular weight. Upon a peroxisomal CoA ligation reaction, catalyzed by a beta-oxidation component enzyme acyl-CoA ligase ACL891, MFDHMP-3C-CoA would then be restricted to peroxisomes for the following beta-oxidation pathway steps. The peroxisomal beta-oxidation machinery than converts MFDHMP-3C-CoA into MPA_CoA, via a beta-oxidation chain-shortening process. Finally mpaH acts as a peroxisomal acyl-CoA hydrolase with high substrate specificity toward MPA-CoA to release the final product MPA. The protein is ER-bound oxygenase mpaB' of Penicillium brevicompactum.